A 247-amino-acid polypeptide reads, in one-letter code: Adenosylcobinamide-GDP ribazoletransferase (247 aa).

The next 5 helical transmembrane spans lie at 34–54 (IITF…VFMV), 57–77 (AWCG…LMTG), 113–133 (GGLA…ELAL), 138–158 (ILAS…LLMY), and 194–214 (VLLL…AIFI).

The protein belongs to the CobS family. The cofactor is Mg(2+).

The protein resides in the cell inner membrane. It catalyses the reaction alpha-ribazole + adenosylcob(III)inamide-GDP = adenosylcob(III)alamin + GMP + H(+). It carries out the reaction alpha-ribazole 5'-phosphate + adenosylcob(III)inamide-GDP = adenosylcob(III)alamin 5'-phosphate + GMP + H(+). It functions in the pathway cofactor biosynthesis; adenosylcobalamin biosynthesis; adenosylcobalamin from cob(II)yrinate a,c-diamide: step 7/7. Its function is as follows. Joins adenosylcobinamide-GDP and alpha-ribazole to generate adenosylcobalamin (Ado-cobalamin). Also synthesizes adenosylcobalamin 5'-phosphate from adenosylcobinamide-GDP and alpha-ribazole 5'-phosphate. This chain is Adenosylcobinamide-GDP ribazoletransferase, found in Shigella flexneri.